Here is a 321-residue protein sequence, read N- to C-terminus: Cytochrome c biogenesis protein CcsA (321 aa).

The next 8 helical transmembrane spans lie at V17–L37, M46–L63, L71–F91, L98–L118, M143–I163, I225–N245, T259–H273, and A286–L306.

It belongs to the CcmF/CycK/Ccl1/NrfE/CcsA family. As to quaternary structure, may interact with Ccs1.

It localises to the plastid. The protein localises to the chloroplast thylakoid membrane. Its function is as follows. Required during biogenesis of c-type cytochromes (cytochrome c6 and cytochrome f) at the step of heme attachment. This chain is Cytochrome c biogenesis protein CcsA, found in Morus indica (Mulberry).